A 94-amino-acid polypeptide reads, in one-letter code: Cytochrome b-c1 complex subunit 8, mitochondrial (94 aa).

At 2 to 49 (GPPSGKTYMGWWGHMGGPKQKGITSYAVSPYAQKPLQGIFHNAVFNSF) the chain is on the mitochondrial matrix side. A helical transmembrane segment spans residues 50-80 (RRFKSQFLYVLIPAGIYWYWWKNGNEYNEFL). The Mitochondrial intermembrane portion of the chain corresponds to 81–94 (YSKAGREELERVNV).

The protein belongs to the UQCRQ/QCR8 family. In terms of assembly, component of the ubiquinol-cytochrome c oxidoreductase (cytochrome b-c1 complex, complex III, CIII), a multisubunit enzyme composed of 10 subunits. The complex is composed of 3 respiratory subunits cytochrome b (COB), cytochrome c1 (CYT1) and Rieske protein (RIP1), 2 core protein subunits COR1 and QCR2, and 5 low-molecular weight protein subunits QCR6, QCR7, QCR8, QCR9 and QCR10. The complex exists as an obligatory dimer and forms supercomplexes (SCs) in the inner mitochondrial membrane with a monomer or a dimer of cytochrome c oxidase (complex IV, CIV), resulting in 2 different assemblies (supercomplexes III(2)IV and III(2)IV(2)).

It localises to the mitochondrion inner membrane. Its function is as follows. Component of the ubiquinol-cytochrome c oxidoreductase, a multisubunit transmembrane complex that is part of the mitochondrial electron transport chain which drives oxidative phosphorylation. The respiratory chain contains 3 multisubunit complexes succinate dehydrogenase (complex II, CII), ubiquinol-cytochrome c oxidoreductase (cytochrome b-c1 complex, complex III, CIII) and cytochrome c oxidase (complex IV, CIV), that cooperate to transfer electrons derived from NADH and succinate to molecular oxygen, creating an electrochemical gradient over the inner membrane that drives transmembrane transport and the ATP synthase. The cytochrome b-c1 complex catalyzes electron transfer from ubiquinol to cytochrome c, linking this redox reaction to translocation of protons across the mitochondrial inner membrane, with protons being carried across the membrane as hydrogens on the quinol. In the process called Q cycle, 2 protons are consumed from the matrix, 4 protons are released into the intermembrane space and 2 electrons are passed to cytochrome c. In Saccharomyces cerevisiae (strain ATCC 204508 / S288c) (Baker's yeast), this protein is Cytochrome b-c1 complex subunit 8, mitochondrial (QCR8).